Consider the following 252-residue polypeptide: Body wall muscle protein HR-29 (252 aa).

S2 is subject to N-acetylserine. Repeat copies occupy residues R37–S55, Q56–S74, and Q75–S93. A 3 X 19 AA approximate tandem repeats region spans residues R37–S93. Residues I138 to E249 enclose the sHSP domain.

It belongs to the small heat shock protein (HSP20) family. In terms of assembly, exists as an oligomer.

The protein localises to the membrane. May be a component of myofibrils where it acts as a stabilizer. This chain is Body wall muscle protein HR-29, found in Halocynthia roretzi (Sea squirt).